The following is a 111-amino-acid chain: uncharacterized protein (111 aa).

2 helical membrane-spanning segments follow: residues 29 to 49 (LLNF…ATAV) and 52 to 72 (ACFA…YLLA).

The protein localises to the membrane. This is an uncharacterized protein from Saccharomyces cerevisiae (strain ATCC 204508 / S288c) (Baker's yeast).